A 329-amino-acid polypeptide reads, in one-letter code: Olfactory receptor 52L1 (329 aa).

Topologically, residues 1–43 are extracellular; that stretch reads MTLVSFFSFLSKPLIMLLSNSSWRLSQPSFLLVGIPGLEESQH. A glycan (N-linked (GlcNAc...) asparagine) is linked at Asn20. A helical transmembrane segment spans residues 44–64; it reads WIALPLGILYLLALVGNVTIL. The Cytoplasmic segment spans residues 65 to 72; the sequence is FIIWMDPS. The helical transmembrane segment at 73 to 93 threads the bilayer; sequence LHQSMYLFLSMLAAIDLVLAS. The Extracellular portion of the chain corresponds to 94–117; it reads STAPKALAVLLVHAHEIGYIVCLI. An intrachain disulfide couples Cys115 to Cys207. A helical transmembrane segment spans residues 118-138; it reads QMFFIHAFSSMESGVLVAMAL. Residues 139-157 lie on the Cytoplasmic side of the membrane; it reads DRYVAICHPLHHSTILHPG. Residues 158 to 178 form a helical membrane-spanning segment; that stretch reads VIGRIGMVVLVRGLLLLIPFP. Residues 179–214 lie on the Extracellular side of the membrane; the sequence is ILLGTLIFCQATIIGHAYCEHMAVVKLACSETTVNR. A helical membrane pass occupies residues 215-235; it reads AYGLTMALLVIGLDVLAIGVS. The Cytoplasmic segment spans residues 236–255; sequence YAHILQAVLKVPGSEARLKA. A helical transmembrane segment spans residues 256–276; it reads FSTCGSHICVILVFYVPGIFS. Topologically, residues 277–291 are extracellular; sequence FLTHRFGHHVPHHVH. Residues 292–312 traverse the membrane as a helical segment; it reads VLLATRYLLMPPALNPLVYGV. At 313–329 the chain is on the cytoplasmic side; the sequence is KTQQIRQRVLRVFTQKD.

It belongs to the G-protein coupled receptor 1 family.

The protein resides in the cell membrane. Its function is as follows. Odorant receptor. This chain is Olfactory receptor 52L1 (OR52L1), found in Homo sapiens (Human).